The primary structure comprises 147 residues: Fibromodulin (147 aa).

6 LRR repeats span residues 1 to 15, 16 to 37, 40 to 61, 63 to 84, 85 to 105, and 108 to 128; these read LDHN…PLPR, SLRE…ALEG, NLTA…MRGL, SLIL…LPSA, LEQL…YFRG, and KLLY…ASNT. N-linked (GlcNAc...) (keratan sulfate) asparagine glycosylation occurs at asparagine 5. N-linked (GlcNAc...) (keratan sulfate) asparagine glycosylation occurs at asparagine 40. Asparagine 130 carries N-linked (GlcNAc...) (keratan sulfate) asparagine glycosylation. The stretch at 133-147 is one LRR 7 repeat; that stretch reads SLLELDLSYNQLQKI.

This sequence belongs to the small leucine-rich proteoglycan (SLRP) family. SLRP class II subfamily. As to quaternary structure, binds to type I and type II collagen. In terms of processing, binds keratan sulfate chains.

The protein localises to the secreted. Its subcellular location is the extracellular space. It localises to the extracellular matrix. Affects the rate of fibrils formation. May have a primary role in collagen fibrillogenesis. This Sus scrofa (Pig) protein is Fibromodulin (FMOD).